Consider the following 937-residue polypeptide: Isoleucine--tRNA ligase (937 aa).

Residues 58-68 (PYANGSIHIGH) carry the 'HIGH' region motif. Glu561 serves as a coordination point for L-isoleucyl-5'-AMP. The 'KMSKS' region signature appears at 602 to 606 (KMSKS). Lys605 is a binding site for ATP. Positions 900, 903, 920, and 923 each coordinate Zn(2+).

Belongs to the class-I aminoacyl-tRNA synthetase family. IleS type 1 subfamily. In terms of assembly, monomer. Zn(2+) is required as a cofactor.

The protein localises to the cytoplasm. The enzyme catalyses tRNA(Ile) + L-isoleucine + ATP = L-isoleucyl-tRNA(Ile) + AMP + diphosphate. Catalyzes the attachment of isoleucine to tRNA(Ile). As IleRS can inadvertently accommodate and process structurally similar amino acids such as valine, to avoid such errors it has two additional distinct tRNA(Ile)-dependent editing activities. One activity is designated as 'pretransfer' editing and involves the hydrolysis of activated Val-AMP. The other activity is designated 'posttransfer' editing and involves deacylation of mischarged Val-tRNA(Ile). The sequence is that of Isoleucine--tRNA ligase from Pectobacterium carotovorum subsp. carotovorum (strain PC1).